The following is a 911-amino-acid chain: Pesticidal crystal protein Cry1Af (911 aa).

The protein belongs to the delta endotoxin family.

Promotes colloidosmotic lysis by binding to the midgut epithelial cells of both dipteran and lepidopteran larvae. This is Pesticidal crystal protein Cry1Af (cry1Af) from Bacillus thuringiensis.